We begin with the raw amino-acid sequence, 339 residues long: tRNA N6-adenosine threonylcarbamoyltransferase (339 aa).

Fe cation-binding residues include His111 and His115. Substrate contacts are provided by residues 134–138, Asp167, Gly180, and Asn272; that span reads LVSGG. Asp300 lines the Fe cation pocket.

Belongs to the KAE1 / TsaD family. The cofactor is Fe(2+).

The protein resides in the cytoplasm. It catalyses the reaction L-threonylcarbamoyladenylate + adenosine(37) in tRNA = N(6)-L-threonylcarbamoyladenosine(37) in tRNA + AMP + H(+). Its function is as follows. Required for the formation of a threonylcarbamoyl group on adenosine at position 37 (t(6)A37) in tRNAs that read codons beginning with adenine. Is involved in the transfer of the threonylcarbamoyl moiety of threonylcarbamoyl-AMP (TC-AMP) to the N6 group of A37, together with TsaE and TsaB. TsaD likely plays a direct catalytic role in this reaction. This chain is tRNA N6-adenosine threonylcarbamoyltransferase, found in Sodalis glossinidius (strain morsitans).